A 237-amino-acid chain; its full sequence is Urease accessory protein UreF (237 aa).

Belongs to the UreF family. As to quaternary structure, ureD, UreF and UreG form a complex that acts as a GTP-hydrolysis-dependent molecular chaperone, activating the urease apoprotein by helping to assemble the nickel containing metallocenter of UreC. The UreE protein probably delivers the nickel.

The protein localises to the cytoplasm. Its function is as follows. Required for maturation of urease via the functional incorporation of the urease nickel metallocenter. In Rhodopseudomonas palustris (strain HaA2), this protein is Urease accessory protein UreF.